Here is a 525-residue protein sequence, read N- to C-terminus: DNA damage-binding protein cmr1 (525 aa).

Positions 34-50 are enriched in polar residues; it reads TGVFTSNMPRGTSANQS. Disordered regions lie at residues 34–103, 214–240, and 282–301; these read TGVF…ERAK, DASQEKPTSAVKNEDDEDDEDDDDPDP, and TSSVEKYAPESTSDDVPISG. Residues 83–102 show a composition bias toward basic and acidic residues; the sequence is EIAKRKADEEYDRRQEEERA. Residues 182 to 223 form a WD 1 repeat; sequence ITPERIYSMTFHPSEAKPVIFAGDKMGHLGILDASQEKPTSA. Residues 227-239 are compositionally biased toward acidic residues; sequence EDDEDDEDDDDPD. WD repeat units lie at residues 247-287, 339-379, 384-425, 448-491, and 494-525; these read PHTR…SVEK, LSEK…HTDP, EHQS…SSWK, GRWV…LAQL, and DGITAVPAVAVFHRSKNWVAGGTASGKICLWM.

Belongs to the WD repeat DDB2/WDR76 family.

Functionally, DNA-binding protein that binds to both single- and double-stranded DNA. Binds preferentially to UV-damaged DNA. May be involved in DNA-metabolic processes. The polypeptide is DNA damage-binding protein cmr1 (Emericella nidulans (strain FGSC A4 / ATCC 38163 / CBS 112.46 / NRRL 194 / M139) (Aspergillus nidulans)).